The sequence spans 594 residues: Trehalase (594 aa).

An N-terminal signal peptide occupies residues 1-27; the sequence is MDFLNKKIQKILFICILSFLIVNLTKS. N56, N70, N97, and N166 each carry an N-linked (GlcNAc...) asparagine glycan. Residues R190, 197-198, and N234 contribute to the substrate site; that span reads WD. N-linked (GlcNAc...) asparagine glycosylation is present at N242. 243 to 245 serves as a coordination point for substrate; that stretch reads RSQ. Residues N261 and N305 are each glycosylated (N-linked (GlcNAc...) asparagine). Substrate-binding positions include 312–314 and G346; that span reads RPE. D348 (proton donor/acceptor) is an active-site residue. Residues N361, N395, N513, and N537 are each glycosylated (N-linked (GlcNAc...) asparagine). E549 (proton donor/acceptor) is an active-site residue. E564 contributes to the substrate binding site.

Belongs to the glycosyl hydrolase 37 family.

The enzyme catalyses alpha,alpha-trehalose + H2O = alpha-D-glucose + beta-D-glucose. The polypeptide is Trehalase (treh) (Dictyostelium discoideum (Social amoeba)).